A 239-amino-acid polypeptide reads, in one-letter code: MVIKAQSPAGFAEEYIIESIWNNCFPPGTILPAERELSELIGVTRTTLREVLQRLARDGWLTIQHGKPTKVNNFWETSGLNILETLARLDHESVPQLIDNLLSVRTNISTIFIRTALRQHPDKAQEVLATAHEVADHADAFADLDYNIFRGLAFASGNPIYGLILNGMKGLYTRIGRHYFANPEARSLALGFYHKLSSLCEQGAHDQVYETVRRYGHDSGEIWHRMQKNLPGDLAIQGR.

The 69-residue stretch at 6 to 74 (QSPAGFAEEY…HGKPTKVNNF (69 aa)) folds into the HTH gntR-type domain. Positions 34 to 53 (ERELSELIGVTRTTLREVLQ) form a DNA-binding region, H-T-H motif.

Homodimer.

It localises to the cytoplasm. In terms of biological role, multifunctional regulator of fatty acid metabolism. Represses transcription of at least eight genes required for fatty acid transport and beta-oxidation including fadA, fadB, fadD, fadL and fadE. Activates transcription of at least three genes required for unsaturated fatty acid biosynthesis: fabA, fabB and iclR, the gene encoding the transcriptional regulator of the aceBAK operon encoding the glyoxylate shunt enzymes. Binding of FadR is specifically inhibited by long chain fatty acyl-CoA compounds. This chain is Fatty acid metabolism regulator protein, found in Salmonella typhi.